The following is a 345-amino-acid chain: UPF0324 membrane protein Cgl0015/cg0018 (345 aa).

Helical transmembrane passes span 15–37 (LRTGVLQKYTPGLLLCSIAVLIA), 44–66 (FSGVSPLIVAIILGIILTNLIQL), 81–103 (LLRLGIVFLGLQLVFSDILSLGF), 105–124 (MLAVIVCIVAGGIFGTILMG), 134–156 (VLLIACGFSICGAAAVAGVEGVT), 163–185 (VVTAVALVVIFGTLMIPFIPFAT), 205–227 (EIAQVVAAGGVIGGGALGVAVVV), 261–280 (VVPLFILGFLAMVVLRSTVA), 285–307 (VIAAGGFLQTALLSAAMFGLGCG), and 320–342 (PFILAFGSTTLVTSIALAGTLLT).

The protein belongs to the UPF0324 family.

The protein resides in the cell membrane. The sequence is that of UPF0324 membrane protein Cgl0015/cg0018 from Corynebacterium glutamicum (strain ATCC 13032 / DSM 20300 / JCM 1318 / BCRC 11384 / CCUG 27702 / LMG 3730 / NBRC 12168 / NCIMB 10025 / NRRL B-2784 / 534).